A 238-amino-acid polypeptide reads, in one-letter code: Probable septum site-determining protein MinC (238 aa).

It belongs to the MinC family. As to quaternary structure, interacts with MinD and FtsZ.

Cell division inhibitor that blocks the formation of polar Z ring septums. Rapidly oscillates between the poles of the cell to destabilize FtsZ filaments that have formed before they mature into polar Z rings. Prevents FtsZ polymerization. This is Probable septum site-determining protein MinC from Xylella fastidiosa (strain M12).